We begin with the raw amino-acid sequence, 161 residues long: Short form salivary protein D7S (161 aa).

The signal sequence occupies residues 1–18; the sequence is MKFPSILLAILLFKPITA. 3 disulfide bridges follow: cysteine 33-cysteine 67, cysteine 47-cysteine 155, and cysteine 109-cysteine 125.

It belongs to the PBP/GOBP family.

It is found in the secreted. Functionally, in contrast to the related D7 salivary proteins, does not bind serotonin. The sequence is that of Short form salivary protein D7S from Culex quinquefasciatus (Southern house mosquito).